The primary structure comprises 229 residues: Lipoprotein-releasing system ATP-binding protein LolD (229 aa).

Positions 7–229 (LKCKNVTKTY…KNGKLYKKNL (223 aa)) constitute an ABC transporter domain. Residue 43–50 (GDSGSGKS) coordinates ATP.

Belongs to the ABC transporter superfamily. Lipoprotein translocase (TC 3.A.1.125) family. As to quaternary structure, the complex is composed of two ATP-binding proteins (LolD) and two transmembrane proteins (LolC and LolE).

Its subcellular location is the cell membrane. In terms of biological role, part of the ABC transporter complex LolCDE involved in the translocation of lipoproteins, in an ATP-dependent manner. The chain is Lipoprotein-releasing system ATP-binding protein LolD from Wigglesworthia glossinidia brevipalpis.